A 250-amino-acid polypeptide reads, in one-letter code: Phosphoribosylaminoimidazole-succinocarboxamide synthase (250 aa).

Belongs to the SAICAR synthetase family.

It carries out the reaction 5-amino-1-(5-phospho-D-ribosyl)imidazole-4-carboxylate + L-aspartate + ATP = (2S)-2-[5-amino-1-(5-phospho-beta-D-ribosyl)imidazole-4-carboxamido]succinate + ADP + phosphate + 2 H(+). Its pathway is purine metabolism; IMP biosynthesis via de novo pathway; 5-amino-1-(5-phospho-D-ribosyl)imidazole-4-carboxamide from 5-amino-1-(5-phospho-D-ribosyl)imidazole-4-carboxylate: step 1/2. The chain is Phosphoribosylaminoimidazole-succinocarboxamide synthase from Bifidobacterium adolescentis (strain ATCC 15703 / DSM 20083 / NCTC 11814 / E194a).